A 165-amino-acid polypeptide reads, in one-letter code: MSIDMLIKKIASTSDCRLFEADGLPVIDEKHQLPKDISEFYEQCGGAVLYENADYPIYIVRPAEFELANPIIVGELCEEDISSEWYIVCTDGKGEYLTIDLNDQRKGKCYDSFFDRHGIVGETQVIASSFTDLIQRLLENKGKHWYWLRDDYVSLGDAYDGIEIE.

As to quaternary structure, probably interacts with cognate toxin YokI but not with other non-cognate toxins. The interaction inhibits the toxic activity of YokI.

Its subcellular location is the cytoplasm. Immunity component of one of 6 LXG toxin-immunity modules in this strain. They promote kin selection, mediate competition in biofilms, and drive spatial segregation of different strains, indicating that LXG toxins may help avoid warfare between strains in biofilms. Mediates intercellular competition during biofilm formation; disruption of the operon disadvantages the bacteria, but overexpression of the cognate immunity protein restores growth in competition with wild-type. In situ neutralizes the toxic effect of cognate toxin YokI. Neutralizes the ability to inhibit growth of cognate toxin YokI upon expression in E.coli. Does not have immunity protein activity on other LXG toxins. This chain is Immunity protein YokJ (yokJ), found in Bacillus subtilis (strain 168).